Consider the following 256-residue polypeptide: Imidazole glycerol phosphate synthase subunit HisF (256 aa).

Active-site residues include aspartate 11 and aspartate 130.

Belongs to the HisA/HisF family. Heterodimer of HisH and HisF.

Its subcellular location is the cytoplasm. The enzyme catalyses 5-[(5-phospho-1-deoxy-D-ribulos-1-ylimino)methylamino]-1-(5-phospho-beta-D-ribosyl)imidazole-4-carboxamide + L-glutamine = D-erythro-1-(imidazol-4-yl)glycerol 3-phosphate + 5-amino-1-(5-phospho-beta-D-ribosyl)imidazole-4-carboxamide + L-glutamate + H(+). Its pathway is amino-acid biosynthesis; L-histidine biosynthesis; L-histidine from 5-phospho-alpha-D-ribose 1-diphosphate: step 5/9. Functionally, IGPS catalyzes the conversion of PRFAR and glutamine to IGP, AICAR and glutamate. The HisF subunit catalyzes the cyclization activity that produces IGP and AICAR from PRFAR using the ammonia provided by the HisH subunit. The chain is Imidazole glycerol phosphate synthase subunit HisF from Cupriavidus necator (strain ATCC 17699 / DSM 428 / KCTC 22496 / NCIMB 10442 / H16 / Stanier 337) (Ralstonia eutropha).